The sequence spans 344 residues: D-arabinose dehydrogenase [NAD(P)+] heavy chain (344 aa).

Tyr71 (proton donor) is an active-site residue. His131 lines the substrate pocket. Thr151 carries the phosphothreonine modification. Residue 241 to 295 participates in NADP(+) binding; that stretch reads SPLGSHGAPNLKIPLVKKLAEKYNVTGNDLLISYHIRQGTIVIPRSLNPVRISSS.

Belongs to the aldo/keto reductase family. As to quaternary structure, heterodimer of a heavy chain and a light chain.

The protein localises to the cytoplasm. The enzyme catalyses D-arabinose + NADP(+) = D-arabinono-1,4-lactone + NADPH + H(+). It carries out the reaction D-arabinose + NAD(+) = D-arabinono-1,4-lactone + NADH + H(+). Its function is as follows. Catalyzes the oxidation of D-arabinose, L-xylose, L-fucose and L-galactose in the presence of NADP(+). This chain is D-arabinose dehydrogenase [NAD(P)+] heavy chain (ARA1), found in Saccharomyces cerevisiae (strain ATCC 204508 / S288c) (Baker's yeast).